Here is a 728-residue protein sequence, read N- to C-terminus: 1,4-alpha-glucan branching enzyme GlgB (728 aa).

Asp405 functions as the Nucleophile in the catalytic mechanism. Residue Glu458 is the Proton donor of the active site.

This sequence belongs to the glycosyl hydrolase 13 family. GlgB subfamily. Monomer.

The catalysed reaction is Transfers a segment of a (1-&gt;4)-alpha-D-glucan chain to a primary hydroxy group in a similar glucan chain.. Its pathway is glycan biosynthesis; glycogen biosynthesis. Catalyzes the formation of the alpha-1,6-glucosidic linkages in glycogen by scission of a 1,4-alpha-linked oligosaccharide from growing alpha-1,4-glucan chains and the subsequent attachment of the oligosaccharide to the alpha-1,6 position. The protein is 1,4-alpha-glucan branching enzyme GlgB of Escherichia coli O139:H28 (strain E24377A / ETEC).